Consider the following 348-residue polypeptide: MSRQINANTPVSRRRSGLRGRRLSYSPEDAVPTPAPRFSILEARRAADRPAEERMRAWHVIGDTSEPVTLRFVHNNAQYTVHGNAPFNTADFQEERDSQETEAANRAHQRAVHLHEHLHEVQETAAPLPNYSPVHSPDLTVMEDLETPRQRFETMFHAVDAESEDEAVPLPQVDMAVFCHICSCFFTDIKNYNSSFVTTSECNHAVCFKCYTSIMFDKELFKCSMCNRATPTCRVYNHKGFVELLPTRAVRDKQAIKTHWAQLLDNNMSDSKVPEQNDVQKLQAELAELRAEMASMRAEMASKQLGATMALENRRGSSSSGASSSSTSTSSSSSSSWLWECLLNTRNY.

The span at 1–11 (MSRQINANTPV) shows a compositional bias: polar residues. The interval 1–32 (MSRQINANTPVSRRRSGLRGRRLSYSPEDAVP) is disordered. Positions 12-22 (SRRRSGLRGRR) are enriched in basic residues. An RING-type zinc finger spans residues 179–227 (CHICSCFFTDIKNYNSSFVTTSECNHAVCFKCYTSIMFDKELFKCSMCN). The stretch at 272 to 306 (KVPEQNDVQKLQAELAELRAEMASMRAEMASKQLG) forms a coiled coil. The interval 312–333 (ENRRGSSSSGASSSSTSTSSSS) is disordered. Over residues 316 to 333 (GSSSSGASSSSTSTSSSS) the composition is skewed to low complexity.

The protein belongs to the alphabaculovirus IE2 protein family. Homooligomer. Post-translationally, auto-ubiquitinated.

It localises to the host nucleus. It catalyses the reaction S-ubiquitinyl-[E2 ubiquitin-conjugating enzyme]-L-cysteine + [acceptor protein]-L-lysine = [E2 ubiquitin-conjugating enzyme]-L-cysteine + N(6)-ubiquitinyl-[acceptor protein]-L-lysine.. In terms of biological role, RING-finger E3 ubiquitin ligase that plays an important regulatory role during the initial stages of infection. Migrates to specific nuclear foci early in infection supposely to prepare the sites for viral replication by targeting and ubiquitinating host proteins. The chain is E3 ubiquitin-protein ligase IE2 (IE2) from Choristoneura fumiferana (Spruce budworm moth).